A 361-amino-acid chain; its full sequence is Porphobilinogen deaminase (361 aa).

Ser2 is subject to N-acetylserine. Ser69 bears the Phosphoserine mark. Residue Lys74 is modified to N6-acetyllysine. Residue Ser147 is modified to Phosphoserine. Cys261 is subject to S-(dipyrrolylmethanemethyl)cysteine.

The protein belongs to the HMBS family. As to quaternary structure, monomer. Requires dipyrromethane as cofactor.

It is found in the cytoplasm. Its subcellular location is the cytosol. It carries out the reaction 4 porphobilinogen + H2O = hydroxymethylbilane + 4 NH4(+). It participates in porphyrin-containing compound metabolism; protoporphyrin-IX biosynthesis; coproporphyrinogen-III from 5-aminolevulinate: step 2/4. In terms of biological role, as part of the heme biosynthetic pathway, catalyzes the sequential polymerization of four molecules of porphobilinogen to form hydroxymethylbilane, also known as preuroporphyrinogen. Catalysis begins with the assembly of the dipyrromethane cofactor by the apoenzyme from two molecules of porphobilinogen or from preuroporphyrinogen. The covalently linked cofactor acts as a primer, around which the tetrapyrrole product is assembled. In the last step of catalysis, the product, preuroporphyrinogen, is released, leaving the cofactor bound to the holodeaminase intact. This Rattus norvegicus (Rat) protein is Porphobilinogen deaminase (Hmbs).